Here is a 439-residue protein sequence, read N- to C-terminus: Lipoyl synthase, mitochondrial (439 aa).

The transit peptide at 1 to 37 (MVASARGLRTLHSAHSSISALPASTVPRLQLAVSRCY) directs the protein to the mitochondrion. The [4Fe-4S] cluster site is built by Cys-150, Cys-155, Cys-161, Cys-181, Cys-185, Cys-188, and Ser-396. One can recognise a Radical SAM core domain in the interval 164–385 (GSSKSAATAT…KERALEMGFL (222 aa)).

This sequence belongs to the radical SAM superfamily. Lipoyl synthase family. Requires [4Fe-4S] cluster as cofactor.

It is found in the mitochondrion. The catalysed reaction is [[Fe-S] cluster scaffold protein carrying a second [4Fe-4S](2+) cluster] + N(6)-octanoyl-L-lysyl-[protein] + 2 oxidized [2Fe-2S]-[ferredoxin] + 2 S-adenosyl-L-methionine + 4 H(+) = [[Fe-S] cluster scaffold protein] + N(6)-[(R)-dihydrolipoyl]-L-lysyl-[protein] + 4 Fe(3+) + 2 hydrogen sulfide + 2 5'-deoxyadenosine + 2 L-methionine + 2 reduced [2Fe-2S]-[ferredoxin]. The protein operates within protein modification; protein lipoylation via endogenous pathway; protein N(6)-(lipoyl)lysine from octanoyl-[acyl-carrier-protein]: step 2/2. Functionally, catalyzes the radical-mediated insertion of two sulfur atoms into the C-6 and C-8 positions of the octanoyl moiety bound to the lipoyl domains of lipoate-dependent enzymes, thereby converting the octanoylated domains into lipoylated derivatives. The sequence is that of Lipoyl synthase, mitochondrial from Paracoccidioides lutzii (strain ATCC MYA-826 / Pb01) (Paracoccidioides brasiliensis).